The chain runs to 1060 residues: Desmoglein-1-beta (1060 aa).

The signal sequence occupies residues 1–23; the sequence is MDWHSFRIAALLLTSLVVLEVNS. Positions 24-49 are excised as a propeptide; sequence EFQIQVRDHNAKNGTIKWHSIRRQKR. Cadherin domains are found at residues 50 to 157, 158 to 269, 270 to 389, and 386 to 493; these read EWIK…PPVF, SMTT…IPYL, EQSS…RPGS, and RPGS…PGSD. The Extracellular portion of the chain corresponds to 50–567; that stretch reads EWIKFAAACR…ITEDNVHFGP (518 aa). N-linked (GlcNAc...) (high mannose) asparagine glycosylation is present at Asn110. Asn180 carries N-linked (GlcNAc...) asparagine glycosylation. The disordered stretch occupies residues 490–560; the sequence is PGSDGGGSSS…PEPEPFDITE (71 aa). Positions 492 to 503 are enriched in gly residues; it reads SDGGGSSSGSGG. Polar residues predominate over residues 510–519; the sequence is NGYQGTSTVG. Residues 525–537 show a composition bias toward gly residues; the sequence is GSGGVTSSGGGSG. Residues 549–560 show a composition bias toward acidic residues; it reads DEPEPEPFDITE. A helical membrane pass occupies residues 568-588; it reads AGIGLLIMGFLVLGLVPFLLI. At 589 to 1060 the chain is on the cytoplasmic side; the sequence is CCDCGGAPGG…TKYSTVQYSK (472 aa). The span at 792–801 shows a compositional bias: low complexity; sequence PDPDSSWPPQ. The disordered stretch occupies residues 792–811; that stretch reads PDPDSSWPPQSTEPMCPQST. Desmoglein repeat repeat units follow at residues 835-861, 862-891, 892-921, 922-949, and 950-978; these read AYPS…TVRE, SYAT…ERVV, GPVP…ERVI, APGS…ERVI, and QPTS…ERVV.

As to quaternary structure, interacts with DSC3; there is evidence to suggest that the interaction promotes cell-cell adhesion of keratinocytes. As to expression, expressed in epidermis.

It localises to the cell membrane. It is found in the cell junction. Its subcellular location is the desmosome. The protein localises to the cytoplasm. The protein resides in the nucleus. In terms of biological role, component of intercellular desmosome junctions. Involved in the interaction of plaque proteins and intermediate filaments mediating cell-cell adhesion. This chain is Desmoglein-1-beta (Dsg1b), found in Mus musculus (Mouse).